Here is a 299-residue protein sequence, read N- to C-terminus: Glycine--tRNA ligase alpha subunit (299 aa).

This sequence belongs to the class-II aminoacyl-tRNA synthetase family. In terms of assembly, tetramer of two alpha and two beta subunits.

The protein resides in the cytoplasm. It carries out the reaction tRNA(Gly) + glycine + ATP = glycyl-tRNA(Gly) + AMP + diphosphate. This is Glycine--tRNA ligase alpha subunit from Desulforapulum autotrophicum (strain ATCC 43914 / DSM 3382 / VKM B-1955 / HRM2) (Desulfobacterium autotrophicum).